Consider the following 511-residue polypeptide: 60 kDa neurofilament protein (511 aa).

The disordered stretch occupies residues 1 to 32 (MSVTQKKTEISTTTTYEGESRPSSGMSGFSYS). The head stretch occupies residues 1-99 (MSVTQKKTEI…KANREREKQD (99 aa)). Polar residues predominate over residues 21 to 30 (RPSSGMSGFS). The IF rod domain maps to 96-449 (EKQDMRDLNE…KLLEGEESRV (354 aa)). Residues 100 to 135 (MRDLNERFANYIEKVRFLEAQNKKLAGELEELKSKW) form a coil 1A region. Residues 136–145 (GKETSAIKEM) are linker 1. Residues 146–284 (YETELEEARK…VHAQELKELA (139 aa)) are coil 1B. Positions 285–303 (ALAYRDTTAENREFWRNEL) are linker 12. Residues 304–449 (AQAIRDIQQE…KLLEGEESRV (146 aa)) are coil 2. The interval 450–511 (GMKQIVEQVV…EEKKSMGSSD (62 aa)) is tail. Residues 479-511 (GYEATGGITTTTTTSSQERRSMSEEKKSMGSSD) are disordered. Low complexity predominate over residues 483–492 (TGGITTTTTT). The segment covering 495–511 (QERRSMSEEKKSMGSSD) has biased composition (basic and acidic residues).

This sequence belongs to the intermediate filament family.

Major squid neurofilament protein. In Doryteuthis pealeii (Longfin inshore squid), this protein is 60 kDa neurofilament protein.